Reading from the N-terminus, the 578-residue chain is Frizzled-2 (578 aa).

The signal sequence occupies residues 1–17 (MLLRISVLFLLLGSCGA). Topologically, residues 18-236 (LFGKRQKCEQ…AESHSLVSNW (219 aa)) are extracellular. The FZ domain maps to 20–144 (GKRQKCEQIT…MSTGNICAAP (125 aa)). Cystine bridges form between Cys-25/Cys-86, Cys-33/Cys-79, Cys-70/Cys-108, Cys-97/Cys-141, and Cys-101/Cys-125. N-linked (GlcNAc...) asparagine glycosylation occurs at Asn-39. The tract at residues 138–175 (GNICAAPPDTPKKQHKGHHHKNQNQNQNQNHNYSPDGP) is disordered. A compositionally biased stretch (basic residues) spans 150 to 159 (KQHKGHHHKN). Residues 160 to 169 (QNQNQNQNHN) are compositionally biased toward low complexity. Residue Asn-213 is glycosylated (N-linked (GlcNAc...) asparagine). The helical transmembrane segment at 237 to 257 (MAFWSITCCVLASFTFLTFLI) threads the bilayer. Topologically, residues 258–268 (ETDRFQYPERP) are cytoplasmic. The chain crosses the membrane as a helical span at residues 269–289 (IFMLAFCQLMVAVGFMIRYFV). At 290–312 (GHEEIACDSMRIKGADDNSGSLC) the chain is on the extracellular side. A helical membrane pass occupies residues 313–333 (FVVFLLTYFFGMAASVWWVIL). The Cytoplasmic portion of the chain corresponds to 334–354 (SLTWVLSAASKWSPEAISSFS). The helical transmembrane segment at 355–375 (FHFHVVGWCLPAIQTVLVIVF) threads the bilayer. Residues 376-398 (NAIDGDPITGICYVGNTDLQFQR) lie on the Extracellular side of the membrane. A helical transmembrane segment spans residues 399 to 419 (IFVLFPLLVYFIVGVLFLVIG). The Cytoplasmic portion of the chain corresponds to 420–449 (FCNLWSIRNEVQKQHPSLESAHKITQLMSK). Residues 450–470 (IGIFSLLYTIPSLLIICVLFY) form a helical membrane-spanning segment. Residues 471–497 (EQNHRSLWEQSQLCSCSPKQTIGDSSL) lie on the Extracellular side of the membrane. The helical transmembrane segment at 498–518 (IISLIKTCCMCILGWTSGFWV) threads the bilayer. Residues 519–578 (CSTKTLSSWKNAICCLGSSRSLPKYQPADILYAKSDMSSSQFYNTSLRHNHLYGGIPDKL) are Cytoplasmic-facing. The short motif at 522-527 (KTLSSW) is the Lys-Thr-X-X-X-Trp motif, mediates interaction with the PDZ domain of Dvl family members element. Residues 556-558 (SSS) carry the PDZ-binding motif.

The protein belongs to the G-protein coupled receptor Fz/Smo family. In terms of tissue distribution, expressed in two pairs of head neurons and throughout the pharynx.

The protein resides in the cell membrane. Receptor for Wnt proteins. Most frizzled receptors are coupled to the beta-catenin canonical signaling pathway, which leads to the activation of disheveled proteins, inhibition of gsk-3 kinase, nuclear accumulation of beta-catenin and activation of Wnt target genes. A second signaling pathway involving PKC and calcium fluxes has been seen for some family members, but it is not yet clear if it represents a distinct pathway or if it can be integrated in the canonical pathway, as PKC seems to be required for Wnt-mediated inactivation of gsk-3 kinase. Both pathways seem to involve interactions with G-proteins. Required for the migration and axon formation and guidance of different neuronal cell types including canal-associated neurons (CAN), hermaphrodite-specific neurons (HSN), anterior lateral microtubule neurons (ALM), and the right Q neuroblast (QR) and its descendants. Directs ALM migration through frizzled protein mom-5 and Wnt ligands cwn-1, cwn-2 and egl-20. May act redundantly with mom-5 to direct CAN migration. Plays a role in the organization of head ganglion cells. Probably by acting as a receptor for Wnt ligand cwn-2, plays a role in the positioning of the nerve ring and may in addition positively regulate the neurite outgrowth of RME GABAergic motor neurons along the anterior-posterior axis of the body. The polypeptide is Frizzled-2 (Caenorhabditis elegans).